The primary structure comprises 368 residues: uncharacterized protein (368 aa).

A compositionally biased stretch (low complexity) spans 156–182; sequence SNVNAHNNNNNSNNNNNNNNNSNNNNN. Disordered stretches follow at residues 156 to 213, 228 to 259, and 291 to 319; these read SNVN…SSPY, ASTN…INDL, and STTS…FSTA. The segment covering 183–194 has biased composition (polar residues); sequence LYNQTQFSTRYF. 2 stretches are compositionally biased toward low complexity: residues 195-213 and 228-240; these read NSNS…SSPY and ASTN…SNNS. Polar residues-rich tracts occupy residues 241–254 and 297–311; these read MHTN…TSAD and IGTN…PSPS.

This is an uncharacterized protein from Saccharomyces cerevisiae (strain ATCC 204508 / S288c) (Baker's yeast).